The sequence spans 330 residues: Interleukin-12 subunit beta (330 aa).

Positions 1 to 22 (MHPQQLVVSWFSLVLLASPIMA) are cleaved as a signal peptide. One can recognise an Ig-like C2-type domain in the interval 23–106 (IWELEKNVYV…LSHSLLLLHK (84 aa)). An intrachain disulfide couples C50 to C90. 2 N-linked (GlcNAc...) asparagine glycosylation sites follow: N136 and N224. One can recognise a Fibronectin type-III domain in the interval 239 to 330 (PPKNLQLKPL…WSEWASVSCS (92 aa)).

It belongs to the IL-12B family. Heterodimer with IL12A; disulfide-linked. The heterodimer is known as interleukin IL-12. Heterodimer with IL23A; disulfide-linked. The heterodimer is known as interleukin IL-23. Also secreted as a monomer. Interacts with NBR1; this interaction promotes IL-12 secretion.

Its subcellular location is the secreted. Cytokine that can act as a growth factor for activated T and NK cells, enhance the lytic activity of NK/lymphokine-activated killer cells, and stimulate the production of IFN-gamma by resting PBMC. Its function is as follows. Associates with IL23A to form the IL-23 interleukin, a heterodimeric cytokine which functions in innate and adaptive immunity. IL-23 may constitute with IL-17 an acute response to infection in peripheral tissues. IL-23 binds to a heterodimeric receptor complex composed of IL12RB1 and IL23R, activates the Jak-Stat signaling cascade, stimulates memory rather than naive T-cells and promotes production of pro-inflammatory cytokines. IL-23 induces autoimmune inflammation and thus may be responsible for autoimmune inflammatory diseases and may be important for tumorigenesis. The chain is Interleukin-12 subunit beta (IL12B) from Lama glama (Llama).